The sequence spans 840 residues: DNA mismatch repair protein MutS (840 aa).

Position 601–608 (Gly601–Ser608) interacts with ATP.

This sequence belongs to the DNA mismatch repair MutS family.

This protein is involved in the repair of mismatches in DNA. It is possible that it carries out the mismatch recognition step. This protein has a weak ATPase activity. This is DNA mismatch repair protein MutS from Lactococcus lactis subsp. cremoris (strain SK11).